The following is a 359-amino-acid chain: Ni-sirohydrochlorin a,c-diamide reductive cyclase complex, component CfbD (359 aa).

This sequence belongs to the NifD/NifK/NifE/NifN family. Homodimer or monomer. The Ni-sirohydrochlorin a,c-diamide reductive cyclase complex is composed of a NifH homolog component CfbC and a NifD homolog component CfbD. [4Fe-4S] cluster is required as a cofactor.

It carries out the reaction Ni-sirohydrochlorin a,c-diamide + 3 AH2 + ATP + H2O = 15,17(3)-seco-F430-17(3)-acid + 3 A + ADP + phosphate. Functionally, involved in the biosynthesis of the unique nickel-containing tetrapyrrole coenzyme F430, the prosthetic group of methyl-coenzyme M reductase (MCR), which plays a key role in methanogenesis and anaerobic methane oxidation. Catalyzes both the six-electron reduction of the tetrahydroporphyrin ring system and the gamma-lactamization of the c-acetamide side chain of Ni-sirohydrochlorin a,c-diamide to yield 15,17(3)-seco-F430-17(3)-acid (seco-F430), the last intermediate in the biosynthesis of the coenzyme F430. This is Ni-sirohydrochlorin a,c-diamide reductive cyclase complex, component CfbD from Methanothermobacter thermautotrophicus (strain ATCC 29096 / DSM 1053 / JCM 10044 / NBRC 100330 / Delta H) (Methanobacterium thermoautotrophicum).